Consider the following 354-residue polypeptide: 3'-hydroxy-N-methyl-(S)-coclaurine 4'-O-methyltransferase 1 (354 aa).

D223 contacts S-adenosyl-L-methionine. Catalysis depends on H261, which acts as the Proton acceptor.

This sequence belongs to the class I-like SAM-binding methyltransferase superfamily. Cation-independent O-methyltransferase family. COMT subfamily. As to expression, expressed in roots, stems, leaves and flowers. Restricted to sieve elements of the phloem adjacent or proximal to laticifers.

The enzyme catalyses (S)-3'-hydroxy-N-methylcoclaurine + S-adenosyl-L-methionine = (S)-reticuline + S-adenosyl-L-homocysteine + H(+). It functions in the pathway alkaloid biosynthesis; (S)-reticuline biosynthesis; (S)-reticuline from (S)-norcoclaurine: step 4/4. Its function is as follows. Involved in the biosynthesis of benzylisoquinoline alkaloids. Catalyzes the transfer of the methyl group to the 4'-hydroxyl group of 3'-hydroxy-N-methylcoclaurine to form reticuline. Also involved in the papaverine biosynthesis. This Papaver somniferum (Opium poppy) protein is 3'-hydroxy-N-methyl-(S)-coclaurine 4'-O-methyltransferase 1.